The following is a 121-amino-acid chain: MARTAQKLITRIKRKVRVRKKIVGTAQRPRLNVFKSARHIYAQLIDDTAGITLASCSTLSTSAESLSYTGNIAAAVHVGKEIAGLAKEKNITAVVFDRNGFLYHGRIKALADAARESGLLF.

The protein belongs to the universal ribosomal protein uL18 family. As to quaternary structure, part of the 50S ribosomal subunit; part of the 5S rRNA/L5/L18/L25 subcomplex. Contacts the 5S and 23S rRNAs.

This is one of the proteins that bind and probably mediate the attachment of the 5S RNA into the large ribosomal subunit, where it forms part of the central protuberance. The polypeptide is Large ribosomal subunit protein uL18 (Pelobacter propionicus (strain DSM 2379 / NBRC 103807 / OttBd1)).